A 91-amino-acid polypeptide reads, in one-letter code: Small ribosomal subunit protein bS6 (91 aa).

The protein belongs to the bacterial ribosomal protein bS6 family.

In terms of biological role, binds together with bS18 to 16S ribosomal RNA. The sequence is that of Small ribosomal subunit protein bS6 from Leptospira interrogans serogroup Icterohaemorrhagiae serovar copenhageni (strain Fiocruz L1-130).